The primary structure comprises 268 residues: L-gamma-glutamyl-L-propargylglycine hydroxylase (268 aa).

It depends on Fe(2+) as a cofactor.

It carries out the reaction L-gamma-glutamyl-L-propargylglycine + 2-oxoglutarate + O2 = L-gamma-glutamyl-(3R)-L-beta-ethynylserine + succinate + CO2. It functions in the pathway amino-acid metabolism. The protein operates within antibiotic biosynthesis. Involved in the biosynthesis of terminal alkyne-containing amino acids such as L-beta-ethynylserine, that are produced as antibiotics by S.cattleya. Catalyzes the hydroxylation of the dipeptide L-gamma-glutamyl-L-propargylglycine, leading to L-gamma-glutamyl-L-beta-ethynylserine. Cannot use L-propargylglycine as substrate. In Streptantibioticus cattleyicolor (strain ATCC 35852 / DSM 46488 / JCM 4925 / NBRC 14057 / NRRL 8057) (Streptomyces cattleya), this protein is L-gamma-glutamyl-L-propargylglycine hydroxylase.